The primary structure comprises 352 residues: MDATSIITQVSRDDEQLNVYPSYPNDKDAWLGFSGSVWLPDCPADHAQLTHDVDRLKPQKRGLFHSLLCCWRRNRTKTNQNGTQIDGSTTPPPLPDQQRYLLPQVRLTDMHRKCMVIDLDETLVHSSFKPIPNADFIVPVEIDGTVHQVYVLKRPHVDEFLQKMGELYECVLFTASLAKYADPVADLLDKWNVFRARLFRESCVYYRGNYIKDLNRLGRDLQKIVIVDNSPASYIFHPDNAVPVKSWFDDVTDCELRELIPLFEKLSKVDSVYSVLCNSNQPLNNQTNQQQHPQELQQAPNQLHQQLQQQQQQQTISATTVITQATTLSAPTMLNQQQTSPPSPQSELLQKT.

The prion-like domain necessary for both protein assembly and membrane targeting stretch occupies residues 1–102 (MDATSIITQV…PLPDQQRYLL (102 aa)). The interval 103–267 (PQVRLTDMHR…ELIPLFEKLS (165 aa)) is mediates substrate recognition. The region spanning 108–266 (TDMHRKCMVI…RELIPLFEKL (159 aa)) is the FCP1 homology domain. 2 disordered regions span residues 284–310 (NNQT…LQQQ) and 332–352 (TMLN…LQKT).

As to quaternary structure, monomer. Forms higher-order protein aggregates with amyloid-like features during gastrulation. Interacts with babo, dah, Irk1, pch2, Ras64B, sax and Src64B.

Its subcellular location is the cell membrane. It carries out the reaction O-phospho-L-seryl-[protein] + H2O = L-seryl-[protein] + phosphate. Phosphatase activity requires amyloid-like aggregation on the membrane. In terms of biological role, prion-like membrane-associated phosphatase. Phosphatase activity depends on amyloid-like assembly at the membrane. Might have a role in establishment of segment polarity in embryos. This is Phosphatase Herzog from Drosophila melanogaster (Fruit fly).